The sequence spans 345 residues: MTDKTSLSYKDAGVDIDAGNALVGRIKGVVKKTRRPEVMGGLGGFGALCALPQKYREPVLVSGTDGVGTKLRLAMDLKRHDTIGIDLVAMCVNDLVVQGAEPLFFLDYYATGKLDVDTASAVISGIAEGCLQSGCSLVGGETAEMPGMYHGEDYDVAGFCVGVVEKSEIIDGSKVSDGDVLIALGSSGPHSNGYSLVRKILEVSGCDPQTTELDGKPLADHLLAPTRIYVKSVLELIEKVDVHAIAHLTGGGFWENIPRVLPDNTQAVIDESSWQWPEVFNWLQTAGNVERHEMYRTFNCGVGMIIALPAPEVDKALALLNANGENTWKIGIIKASDSEQRVVIE.

Belongs to the AIR synthase family.

The protein resides in the cytoplasm. It catalyses the reaction 2-formamido-N(1)-(5-O-phospho-beta-D-ribosyl)acetamidine + ATP = 5-amino-1-(5-phospho-beta-D-ribosyl)imidazole + ADP + phosphate + H(+). It functions in the pathway purine metabolism; IMP biosynthesis via de novo pathway; 5-amino-1-(5-phospho-D-ribosyl)imidazole from N(2)-formyl-N(1)-(5-phospho-D-ribosyl)glycinamide: step 2/2. This Shigella dysenteriae serotype 1 (strain Sd197) protein is Phosphoribosylformylglycinamidine cyclo-ligase.